The following is a 394-amino-acid chain: Subtilisin-like protease 4 (394 aa).

An N-terminal signal peptide occupies residues 1-17 (CLKTLSVFLAAFAAADA). Residues 18 to 116 (RAVFKTQGHK…VEQDQVVRIS (99 aa)) constitute a propeptide that is removed on maturation. Residues 36-115 (YIVVMKDGVS…YVEQDQVVRI (80 aa)) form the Inhibitor I9 domain. N-linked (GlcNAc...) asparagine glycosylation is present at Asn100. In terms of domain architecture, Peptidase S8 spans 126–394 (SWGLGRVSHR…STTNRLLYNG (269 aa)). Residues Asp158 and His189 each act as charge relay system in the active site. N-linked (GlcNAc...) asparagine glycans are attached at residues Asn250 and Asn306. Ser344 acts as the Charge relay system in catalysis.

Belongs to the peptidase S8 family.

Its subcellular location is the secreted. In terms of biological role, secreted subtilisin-like serine protease with keratinolytic activity that contributes to pathogenicity. The polypeptide is Subtilisin-like protease 4 (SUB4) (Trichophyton equinum (Horse ringworm fungus)).